The sequence spans 352 residues: Histidinol-phosphate aminotransferase (352 aa).

Lys221 bears the N6-(pyridoxal phosphate)lysine mark.

It belongs to the class-II pyridoxal-phosphate-dependent aminotransferase family. Histidinol-phosphate aminotransferase subfamily. In terms of assembly, homodimer. Requires pyridoxal 5'-phosphate as cofactor.

The enzyme catalyses L-histidinol phosphate + 2-oxoglutarate = 3-(imidazol-4-yl)-2-oxopropyl phosphate + L-glutamate. Its pathway is amino-acid biosynthesis; L-histidine biosynthesis; L-histidine from 5-phospho-alpha-D-ribose 1-diphosphate: step 7/9. In Staphylococcus aureus (strain MSSA476), this protein is Histidinol-phosphate aminotransferase.